The primary structure comprises 343 residues: MKHLLSTHDLHRGAAIQILDTAEEMASVTEREVKKLPALRGRTVVNLFFEDSTRTRISFEAAAKRLSADVINFAAKGSSVSKGESLKDTAQTLEAMSADAVVIRHGASGAPQRLADSGWIDAAVINAGDGTHEHPTQALLDAFTMRRHWAKIFGVSSVGSDVAGMRVAIVGDVLHSRVARSNVWLLHTLGAQVTLVAPPTLLPIGVQTWPCAVSFDLDQTLDAGVDAVMMLRVQGERMHAAFFPSEREYSRRWGFDDARLARLDALGLDETIIMHPGPMNRGLEISSAAADSSRSTVLDQVRNGVSVRMAALYLLLSGGLQQPDQSNPQRNVTNTSNWQETKR.

Residues arginine 54 and threonine 55 each coordinate carbamoyl phosphate. Residue lysine 82 participates in L-aspartate binding. Residues arginine 104, histidine 134, and glutamine 137 each coordinate carbamoyl phosphate. 2 residues coordinate L-aspartate: arginine 177 and arginine 232. Residues glycine 277 and proline 278 each coordinate carbamoyl phosphate. Residues 323–343 form a disordered region; the sequence is PDQSNPQRNVTNTSNWQETKR.

It belongs to the aspartate/ornithine carbamoyltransferase superfamily. ATCase family. Heterododecamer (2C3:3R2) of six catalytic PyrB chains organized as two trimers (C3), and six regulatory PyrI chains organized as three dimers (R2).

The enzyme catalyses carbamoyl phosphate + L-aspartate = N-carbamoyl-L-aspartate + phosphate + H(+). It functions in the pathway pyrimidine metabolism; UMP biosynthesis via de novo pathway; (S)-dihydroorotate from bicarbonate: step 2/3. Catalyzes the condensation of carbamoyl phosphate and aspartate to form carbamoyl aspartate and inorganic phosphate, the committed step in the de novo pyrimidine nucleotide biosynthesis pathway. This Renibacterium salmoninarum (strain ATCC 33209 / DSM 20767 / JCM 11484 / NBRC 15589 / NCIMB 2235) protein is Aspartate carbamoyltransferase catalytic subunit.